Reading from the N-terminus, the 325-residue chain is Tagatose 1,6-diphosphate aldolase (325 aa).

It belongs to the aldolase LacD family.

The catalysed reaction is D-tagatofuranose 1,6-bisphosphate = D-glyceraldehyde 3-phosphate + dihydroxyacetone phosphate. Its pathway is carbohydrate metabolism; D-tagatose 6-phosphate degradation; D-glyceraldehyde 3-phosphate and glycerone phosphate from D-tagatose 6-phosphate: step 2/2. This Staphylococcus epidermidis (strain ATCC 35984 / DSM 28319 / BCRC 17069 / CCUG 31568 / BM 3577 / RP62A) protein is Tagatose 1,6-diphosphate aldolase.